We begin with the raw amino-acid sequence, 639 residues long: 1-deoxy-D-xylulose-5-phosphate synthase 1 (639 aa).

Thiamine diphosphate contacts are provided by residues His-79 and 120–122 (AHS). Residue Asp-155 coordinates Mg(2+). Residues 156–157 (GA), Asn-184, Tyr-293, and Glu-373 contribute to the thiamine diphosphate site. Asn-184 is a Mg(2+) binding site.

This sequence belongs to the transketolase family. DXPS subfamily. Homodimer. Requires Mg(2+) as cofactor. Thiamine diphosphate is required as a cofactor.

The enzyme catalyses D-glyceraldehyde 3-phosphate + pyruvate + H(+) = 1-deoxy-D-xylulose 5-phosphate + CO2. It functions in the pathway metabolic intermediate biosynthesis; 1-deoxy-D-xylulose 5-phosphate biosynthesis; 1-deoxy-D-xylulose 5-phosphate from D-glyceraldehyde 3-phosphate and pyruvate: step 1/1. Its function is as follows. Catalyzes the acyloin condensation reaction between C atoms 2 and 3 of pyruvate and glyceraldehyde 3-phosphate to yield 1-deoxy-D-xylulose-5-phosphate (DXP). In Jannaschia sp. (strain CCS1), this protein is 1-deoxy-D-xylulose-5-phosphate synthase 1.